Reading from the N-terminus, the 276-residue chain is Omega-amidase NIT2-B (276 aa).

Residues 4–248 (FRLSLVQFLV…ETVISADIDL (245 aa)) enclose the CN hydrolase domain. Glu-43 acts as the Proton acceptor in catalysis. The Proton donor role is filled by Lys-112. The active-site Nucleophile is the Cys-153.

The protein belongs to the carbon-nitrogen hydrolase superfamily. NIT1/NIT2 family. As to quaternary structure, homodimer.

The protein resides in the cytoplasm. It catalyses the reaction 2-oxoglutaramate + H2O = 2-oxoglutarate + NH4(+). The enzyme catalyses 2-oxosuccinamate + H2O = oxaloacetate + NH4(+). Has omega-amidase activity. The role of omega-amidase is to remove potentially toxic intermediates by converting 2-oxoglutaramate and 2-oxosuccinamate to biologically useful 2-oxoglutarate and oxaloacetate, respectively. The sequence is that of Omega-amidase NIT2-B (nit2b) from Xenopus laevis (African clawed frog).